Consider the following 759-residue polypeptide: Tripartite motif-containing protein 46 (759 aa).

The tract at residues 1-166 (MAEGEDMQTF…VERYRQSVSV (166 aa)) is required for proximal axon localization, axon formation and migration. The RING-type 1; degenerate zinc-finger motif lies at 33–59 (CPVCQEMYKQPLVLPCTHNVCQACARE). Residues 67–98 (IGHGGDPSSEPTSPASTPSTRSPRLSRRTLPK) form a disordered region. Residues 73 to 89 (PSSEPTSPASTPSTRSP) are compositionally biased toward low complexity. The segment at 172–231 (CQLCKPPPLEATKGCSECRATFCNECFKLFHPWGTQKAQHEPTLPTLSFRPKGLMCPDHK) adopts an RING-type 2; degenerate zinc-finger fold. The B box-type zinc-finger motif lies at 222–263 (PKGLMCPDHKEEVTHYCKTCQRLVCQLCRVRRTHSGHKITPV). The Zn(2+) site is built by Cys-227, His-230, Cys-249, and His-255. Positions 294–400 (ELEETIRHTE…RATEALQTFR (107 aa)) form a coiled coil. A Phosphoserine modification is found at Ser-330. The COS domain occupies 370–427 (LKETDQPCFVQAAKQLHNRIARATEALQTFRPAASSSFRHCQLDVGREMKLLTELNFL). The tract at residues 411–429 (QLDVGREMKLLTELNFLRV) is required for microtubule association, proximal axon localization and axon formation. In terms of domain architecture, Fibronectin type-III spans 429-528 (VPEAPVIDTQ…EDVHLHTPPA (100 aa)). The B30.2/SPRY domain occupies 513–747 (GYGEYSEDVH…LQEPVGTKPE (235 aa)). Ser-627 is subject to Phosphoserine.

This sequence belongs to the TRIM/RBCC family. Interacts with TUBB3 and TUBA4A. In terms of tissue distribution, expressed in primary hippocampal and cortical neurons.

The protein resides in the cell projection. Its subcellular location is the axon. It is found in the cytoplasm. It localises to the cytoskeleton. Functionally, microtubule-associated protein that is involved in the formation of parallel microtubule bundles linked by cross-bridges in the proximal axon. Required for the uniform orientation and maintenance of the parallel microtubule fascicles, which are important for efficient cargo delivery and trafficking in axons. Thereby also required for proper axon specification, the establishment of neuronal polarity and proper neuronal migration. The chain is Tripartite motif-containing protein 46 from Rattus norvegicus (Rat).